Consider the following 145-residue polypeptide: Large-conductance mechanosensitive channel (145 aa).

2 helical membrane-spanning segments follow: residues 14-34 (VIDL…VDSL) and 81-101 (GIFI…FLMV).

It belongs to the MscL family. In terms of assembly, homopentamer.

Its subcellular location is the cell inner membrane. Functionally, channel that opens in response to stretch forces in the membrane lipid bilayer. May participate in the regulation of osmotic pressure changes within the cell. The protein is Large-conductance mechanosensitive channel of Pelobacter propionicus (strain DSM 2379 / NBRC 103807 / OttBd1).